Reading from the N-terminus, the 352-residue chain is Tropomodulin-3 (352 aa).

Phosphoserine is present on S25.

Belongs to the tropomodulin family. In terms of assembly, binds to the N-terminus of tropomyosin and to actin. Interacts with FLII. As to expression, ubiquitous.

It localises to the cytoplasm. Its subcellular location is the cytoskeleton. Its function is as follows. Blocks the elongation and depolymerization of the actin filaments at the pointed end. The Tmod/TM complex contributes to the formation of the short actin protofilament, which in turn defines the geometry of the membrane skeleton. The polypeptide is Tropomodulin-3 (TMOD3) (Homo sapiens (Human)).